Here is a 406-residue protein sequence, read N- to C-terminus: MAAAVRQDLAQLMNSSGSHKDLAGKYRQILEKAIQLSGAEQLEALKAFVEAMVNENVSLVISRQLLTDFCTHLPNLPDSTAKEIYHFTLEKIQPRVISFEEQVASVRQHLASIYEKEEDWRNAAQVLVGIPLETGQKQYNVDYKLETYLKIARLYLEDDDPVQAEAYINRASLLQNESTNEQLQIHYKVCYARVLDYRRKFIEAAQRYNELSYKTIVHESERLEALKHALHCTILASAGQQRSRMLATLFKDERCQQLAAYGILEKMYLDRIIRGNQLQEFAAMLMPHQKATTADGSSILDRAVIEHNLLSASKLYNNITFEELGALLEIPAAKAEKIASQMITEGRMNGFIDQIDGIVHFETREALPTWDKQIQSLCFQVNNLLEKISQTAPEWTAQAMEAQMAQ.

Position 2 is an N-acetylalanine (Ala-2). N6-acetyllysine is present on Lys-25. In terms of domain architecture, PCI spans 197–366 (YRRKFIEAAQ…GIVHFETREA (170 aa)).

The protein belongs to the CSN4 family. Component of the CSN complex, composed of COPS1/GPS1, COPS2, COPS3, COPS4, COPS5, COPS6, COPS7 (COPS7A or COPS7B), COPS8 and COPS9. In the complex, it probably interacts directly with COPS1, COPS2, COPS3, COPS5, COPS6, COPS7 (COPS7A or COPS7B) and COPS8. Interacts with TOR1A; the interaction is direct and associates TOR1A and SNAPIN with the CSN complex. Interacts with STON2; controls STON2 neddylation levels. Interacts with ERCC6.

Its subcellular location is the cytoplasm. It localises to the nucleus. The protein resides in the cytoplasmic vesicle. It is found in the secretory vesicle. The protein localises to the synaptic vesicle. In terms of biological role, component of the COP9 signalosome complex (CSN), a complex involved in various cellular and developmental processes. The CSN complex is an essential regulator of the ubiquitin (Ubl) conjugation pathway by mediating the deneddylation of the cullin subunits of SCF-type E3 ligase complexes, leading to decrease the Ubl ligase activity of SCF-type complexes such as SCF, CSA or DDB2. Also involved in the deneddylation of non-cullin subunits such as STON2. The complex is also involved in phosphorylation of p53/TP53, c-jun/JUN, IkappaBalpha/NFKBIA, ITPK1, IRF8/ICSBP and SNAPIN, possibly via its association with CK2 and PKD kinases. CSN-dependent phosphorylation of TP53 and JUN promotes and protects degradation by the Ubl system, respectively. The sequence is that of COP9 signalosome complex subunit 4 (COPS4) from Pongo abelii (Sumatran orangutan).